Reading from the N-terminus, the 202-residue chain is Dual-action ribosomal maturation protein DarP (202 aa).

Over residues 1-13 (MPPMTRNTRNNPN) the composition is skewed to low complexity. Positions 1–39 (MPPMTRNTRNNPNGRFPGAFAPEDEDDLPKSKSQRKRDM) are disordered.

It belongs to the DarP family.

The protein resides in the cytoplasm. In terms of biological role, member of a network of 50S ribosomal subunit biogenesis factors which assembles along the 30S-50S interface, preventing incorrect 23S rRNA structures from forming. Promotes peptidyl transferase center (PTC) maturation. This is Dual-action ribosomal maturation protein DarP from Cupriavidus metallidurans (strain ATCC 43123 / DSM 2839 / NBRC 102507 / CH34) (Ralstonia metallidurans).